The primary structure comprises 157 residues: SsrA-binding protein (157 aa).

This sequence belongs to the SmpB family.

Its subcellular location is the cytoplasm. Functionally, required for rescue of stalled ribosomes mediated by trans-translation. Binds to transfer-messenger RNA (tmRNA), required for stable association of tmRNA with ribosomes. tmRNA and SmpB together mimic tRNA shape, replacing the anticodon stem-loop with SmpB. tmRNA is encoded by the ssrA gene; the 2 termini fold to resemble tRNA(Ala) and it encodes a 'tag peptide', a short internal open reading frame. During trans-translation Ala-aminoacylated tmRNA acts like a tRNA, entering the A-site of stalled ribosomes, displacing the stalled mRNA. The ribosome then switches to translate the ORF on the tmRNA; the nascent peptide is terminated with the 'tag peptide' encoded by the tmRNA and targeted for degradation. The ribosome is freed to recommence translation, which seems to be the essential function of trans-translation. This chain is SsrA-binding protein, found in Chlorobaculum tepidum (strain ATCC 49652 / DSM 12025 / NBRC 103806 / TLS) (Chlorobium tepidum).